The chain runs to 239 residues: Sugar fermentation stimulation protein homolog (239 aa).

The protein belongs to the SfsA family.

The chain is Sugar fermentation stimulation protein homolog from Sinorhizobium medicae (strain WSM419) (Ensifer medicae).